A 372-amino-acid chain; its full sequence is Tryptophan--tRNA ligase (372 aa).

The 'HIGH' region motif lies at 79–87 (PSGKFHFGH). The tract at residues 247–268 (KLQPGLDGRKMSSSRPDSTIFL) is disordered. A 'KMSKS' region motif is present at residues 256 to 260 (KMSSS). Residues 257–267 (MSSSRPDSTIF) are compositionally biased toward polar residues.

It belongs to the class-I aminoacyl-tRNA synthetase family.

It localises to the cytoplasm. The enzyme catalyses tRNA(Trp) + L-tryptophan + ATP = L-tryptophyl-tRNA(Trp) + AMP + diphosphate + H(+). In Aeropyrum pernix (strain ATCC 700893 / DSM 11879 / JCM 9820 / NBRC 100138 / K1), this protein is Tryptophan--tRNA ligase.